We begin with the raw amino-acid sequence, 625 residues long: Threonine--tRNA ligase (625 aa).

The editing domain stretch occupies residues Met1–Glu147. Positions Pro206–Pro505 are catalytic. The Zn(2+) site is built by Cys298, His350, and His474.

The protein belongs to the class-II aminoacyl-tRNA synthetase family. In terms of assembly, homodimer. Zn(2+) serves as cofactor.

It is found in the cytoplasm. It catalyses the reaction tRNA(Thr) + L-threonine + ATP = L-threonyl-tRNA(Thr) + AMP + diphosphate + H(+). Its function is as follows. Catalyzes the attachment of threonine to tRNA(Thr) in a two-step reaction: L-threonine is first activated by ATP to form Thr-AMP and then transferred to the acceptor end of tRNA(Thr). Also edits incorrectly charged L-seryl-tRNA(Thr). The protein is Threonine--tRNA ligase of Pyrococcus furiosus (strain ATCC 43587 / DSM 3638 / JCM 8422 / Vc1).